The chain runs to 256 residues: Thiazole synthase (256 aa).

K96 (schiff-base intermediate with DXP) is an active-site residue. 1-deoxy-D-xylulose 5-phosphate contacts are provided by residues G157, 183 to 184, and 205 to 206; these read AG and NT.

This sequence belongs to the ThiG family. Homotetramer. Forms heterodimers with either ThiH or ThiS.

It is found in the cytoplasm. It catalyses the reaction [ThiS sulfur-carrier protein]-C-terminal-Gly-aminoethanethioate + 2-iminoacetate + 1-deoxy-D-xylulose 5-phosphate = [ThiS sulfur-carrier protein]-C-terminal Gly-Gly + 2-[(2R,5Z)-2-carboxy-4-methylthiazol-5(2H)-ylidene]ethyl phosphate + 2 H2O + H(+). Its pathway is cofactor biosynthesis; thiamine diphosphate biosynthesis. Catalyzes the rearrangement of 1-deoxy-D-xylulose 5-phosphate (DXP) to produce the thiazole phosphate moiety of thiamine. Sulfur is provided by the thiocarboxylate moiety of the carrier protein ThiS. In vitro, sulfur can be provided by H(2)S. This chain is Thiazole synthase, found in Bacillus mycoides (strain KBAB4) (Bacillus weihenstephanensis).